Consider the following 104-residue polypeptide: Large ribosomal subunit protein bL21 (104 aa).

Belongs to the bacterial ribosomal protein bL21 family. In terms of assembly, part of the 50S ribosomal subunit. Contacts protein L20.

Functionally, this protein binds to 23S rRNA in the presence of protein L20. This is Large ribosomal subunit protein bL21 from Streptococcus mutans serotype c (strain ATCC 700610 / UA159).